The sequence spans 995 residues: MSRRKQSNPRQIKRSLRDMEAGEEAKAMDSSPKEQEAPDPEAPAIEEPPSPPREDVSPPAVPAPPESPEDPEDMEGQELEMRPQDEEKEEKEEEAAMASPWSGPEELELALQDGQRCVRARLSLTEGLSWGPFYGSIQTRALSPEREEPGPAVTLMVDESCWLRMLPQVLTEEAANSEIYRKDDALWCRVTKVVPSGGLLYVRLVTEPHGAPRHPVQEPVEPGGLAPVHTDIQLLPQQAGMASILATAVINKDVFPCKDCGIWYRSERNLQAHLLYYCASRQRAGSPVSATEEKPKETYPNERVCPFPQCRKSCPSASSLEIHMRSHSGERPFVCLICLSAFTTKANCERHLKVHTDTLSGVCHNCGFISTTRDILYSHLVTNHMVCQPGSKGEIYSPGAGHPAAKLPPDSLAGFQQHSLMHSPLVPADKAPTPSSGLDSKAEVTNGETRVPPQNGGSSESPAAPRTIKVEAAEEPEATRASGPGEPGPQAPSRTPSPHSPNPVRVKTELSSPTPGSSPGPGELTMAGTLFLPQYVFSPDAGTTTVPTAPQASEILAKMSELVHNRLQQGAGSSGAAGTPTGLFSGTKGATCFECEITFNNINNFYVHKRLYCSGRRAPEDPPTVRRPKAATGPARAPAGAAAEPDPSRSSPGPGPREEEASGTTTPEAEAAGRGSEGSQSPGSSVDDAEDDPSRTLCEACNIRFSRHETYTVHKRYYCASRHDPPPRRPPAPTTAPGPAAPALTAPPVRTRRRRKLYELPAAGAPPPAAGPAPVPVVPSPTAELPSSPRPGSASAGPAPALSPSPVPDGPIDLSKRPRRQSPDAPTALPALADYHECTACRVSFHSLEAYLAHKKYSCPAAPLRTTALCPYCPPNGRVRGDLVEHLRQAHGLQVAKPAASPGAEPRTPAERAPRDSPDGRAPRSPSPAPENTPSDPADQGARTPSKGPPAPAPAPGGGGGHRYCRLCNIRFSSLSTFIAHKKYYCSSHAAEHVK.

Over residues 1–14 (MSRRKQSNPRQIKR) the composition is skewed to basic residues. The disordered stretch occupies residues 1 to 103 (MSRRKQSNPR…EAAMASPWSG (103 aa)). Residues 15-36 (SLRDMEAGEEAKAMDSSPKEQE) show a composition bias toward basic and acidic residues. Composition is skewed to acidic residues over residues 67–78 (SPEDPEDMEGQE) and 86–95 (EEKEEKEEEA). Serine 99 and serine 143 each carry phosphoserine. The CCHC FOG-type 1 zinc finger occupies 249-282 (VINKDVFPCKDCGIWYRSERNLQAHLLYYCASRQ). Residues cysteine 257, cysteine 260, histidine 273, and cysteine 278 each coordinate Zn(2+). Phosphoserine is present on serine 286. 3 C2H2-type zinc fingers span residues 303–327 (RVCPFPQCRKSCPSASSLEIHMRSH), 333–355 (FVCLICLSAFTTKANCERHLKVH), and 361–384 (GVCHNCGFISTTRDILYSHLVTNH). The interaction with TACC3 stretch occupies residues 343 to 354 (TTKANCERHLKV). Phosphoserine is present on residues serine 397, serine 497, and serine 500. The disordered stretch occupies residues 424–526 (PLVPADKAPT…SSPGPGELTM (103 aa)). Positions 509-525 (ELSSPTPGSSPGPGELT) are enriched in low complexity. The segment at 584–617 (FSGTKGATCFECEITFNNINNFYVHKRLYCSGRR) adopts a CCHC FOG-type 2 zinc-finger fold. Positions 592, 595, 608, and 613 each coordinate Zn(2+). The interval 616-694 (RRAPEDPPTV…SVDDAEDDPS (79 aa)) is disordered. The segment covering 630–652 (AATGPARAPAGAAAEPDPSRSSP) has biased composition (low complexity). Residues serine 651 and serine 684 each carry the phosphoserine modification. Residues 690–723 (EDDPSRTLCEACNIRFSRHETYTVHKRYYCASRH) form a CCHC FOG-type 3 zinc finger. The Zn(2+) site is built by cysteine 698, cysteine 701, histidine 714, and cysteine 719. The interval 721-827 (SRHDPPPRRP…PRRQSPDAPT (107 aa)) is disordered. Pro residues-rich tracts occupy residues 728-740 (RRPPAPTTAPGPA) and 764-779 (GAPPPAAGPAPVPVVP). Residues 785 to 800 (LPSSPRPGSASAGPAP) are compositionally biased toward low complexity. Residue serine 803 is modified to Phosphoserine. The interaction with CTBP2 stretch occupies residues 811–817 (PIDLSKR). Position 822 is a phosphoserine (serine 822). The segment at 830–863 (PALADYHECTACRVSFHSLEAYLAHKKYSCPAAP) adopts a CCHC FOG-type 4 zinc-finger fold. Zn(2+) contacts are provided by cysteine 838, cysteine 841, histidine 854, and cysteine 859. A C2H2-type 4 zinc finger spans residues 868–891 (ALCPYCPPNGRVRGDLVEHLRQAH). Residues 892–960 (GLQVAKPAAS…APAPAPGGGG (69 aa)) are disordered. Positions 908 to 922 (TPAERAPRDSPDGRA) are enriched in basic and acidic residues. Phosphoserine is present on residues serine 925 and serine 927. The segment at 957 to 990 (GGGGGHRYCRLCNIRFSSLSTFIAHKKYYCSSHA) adopts a CCHC FOG-type 5 zinc-finger fold. Residues cysteine 965, cysteine 968, histidine 981, and cysteine 986 each contribute to the Zn(2+) site.

This sequence belongs to the FOG (Friend of GATA) family. In terms of assembly, interacts with the N-terminal zinc-finger of GATA1, GATA2 and GATA3. Interacts with corepressor CTBP2; this interaction is however not essential for corepressor activity in erythropoiesis. Interacts with TACC3. In terms of tissue distribution, mainly expressed in hematopoietic tissues. Expressed in the spleen, a primary site of hematopoiesis in the adult mouse, as well as in the liver and testis, but not in the heart, brain, lung, kidney, or skeletal muscle. Among hematopoietic cell lines, it is strongly expressed in erythroid and megakaryocytic cell lines. Expressed at low level in several lymphoid and early myeloid cell lines. Not expressed in mast cell and macrophage lines. Expressed in the heart, where it colocalizes with GATA4, GATA5 and GATA6.

The protein resides in the nucleus. In terms of biological role, transcription regulator that plays an essential role in erythroid and megakaryocytic cell differentiation. Essential cofactor that acts via the formation of a heterodimer with transcription factors of the GATA family GATA1, GATA2 and GATA3. Such heterodimer can both activate or repress transcriptional activity, depending on the cell and promoter context. The heterodimer formed with GATA proteins is essential to activate expression of genes such as NFE2, ITGA2B, alpha- and beta-globin, while it represses expression of KLF1. May be involved in regulation of some genes in gonads. May also be involved in cardiac development, in a non-redundant way with ZFPM2/FOG2. This chain is Zinc finger protein ZFPM1 (Zfpm1), found in Mus musculus (Mouse).